Reading from the N-terminus, the 384-residue chain is PqqA peptide cyclase (384 aa).

Residues 14 to 226 (IPAPVGLLAE…IRIVEAARER (213 aa)) form the Radical SAM core domain. [4Fe-4S] cluster is bound by residues C28, C32, and C35.

Belongs to the radical SAM superfamily. PqqE family. In terms of assembly, interacts with PqqD. The interaction is necessary for activity of PqqE. [4Fe-4S] cluster serves as cofactor.

It carries out the reaction [PQQ precursor protein] + S-adenosyl-L-methionine = E-Y cross-linked-[PQQ precursor protein] + 5'-deoxyadenosine + L-methionine + H(+). It functions in the pathway cofactor biosynthesis; pyrroloquinoline quinone biosynthesis. Catalyzes the cross-linking of a glutamate residue and a tyrosine residue in the PqqA protein as part of the biosynthesis of pyrroloquinoline quinone (PQQ). In Methylorubrum populi (strain ATCC BAA-705 / NCIMB 13946 / BJ001) (Methylobacterium populi), this protein is PqqA peptide cyclase.